The primary structure comprises 113 residues: U11-theraphotoxin-Hhn1g (113 aa).

The N-terminal stretch at methionine 1–alanine 21 is a signal peptide. Positions aspartate 22 to arginine 74 are excised as a propeptide. The tract at residues glutamate 61–aspartate 83 is disordered. 3 disulfide bridges follow: cysteine 75/cysteine 90, cysteine 82/cysteine 95, and cysteine 89/cysteine 110.

Belongs to the neurotoxin 14 (magi-1) family. 01 (HNTX-16) subfamily. In terms of tissue distribution, expressed by the venom gland.

The protein localises to the secreted. In terms of biological role, probable ion channel inhibitor. The sequence is that of U11-theraphotoxin-Hhn1g from Cyriopagopus hainanus (Chinese bird spider).